The following is a 313-amino-acid chain: Ribosomal RNA small subunit methyltransferase H (313 aa).

S-adenosyl-L-methionine contacts are provided by residues 35–37 (GGH), D55, F79, D101, and Q108.

Belongs to the methyltransferase superfamily. RsmH family.

It is found in the cytoplasm. It catalyses the reaction cytidine(1402) in 16S rRNA + S-adenosyl-L-methionine = N(4)-methylcytidine(1402) in 16S rRNA + S-adenosyl-L-homocysteine + H(+). Functionally, specifically methylates the N4 position of cytidine in position 1402 (C1402) of 16S rRNA. The protein is Ribosomal RNA small subunit methyltransferase H of Salmonella newport (strain SL254).